The primary structure comprises 136 residues: Large ribosomal subunit protein bL19 (136 aa).

This sequence belongs to the bacterial ribosomal protein bL19 family.

Functionally, this protein is located at the 30S-50S ribosomal subunit interface and may play a role in the structure and function of the aminoacyl-tRNA binding site. This chain is Large ribosomal subunit protein bL19, found in Xylella fastidiosa (strain M23).